The primary structure comprises 178 residues: Negative modulator of initiation of replication (178 aa).

The tract at residues 113-117 is interaction with DNA; that stretch reads RTRVY.

It belongs to the SeqA family. Homodimer. Polymerizes to form helical filaments.

The protein resides in the cytoplasm. Its function is as follows. Negative regulator of replication initiation, which contributes to regulation of DNA replication and ensures that replication initiation occurs exactly once per chromosome per cell cycle. Binds to pairs of hemimethylated GATC sequences in the oriC region, thus preventing assembly of replication proteins and re-initiation at newly replicated origins. Repression is relieved when the region becomes fully methylated. This is Negative modulator of initiation of replication from Photobacterium profundum (strain SS9).